Consider the following 268-residue polypeptide: Phosphatidylglycerol--prolipoprotein diacylglyceryl transferase (268 aa).

7 helical membrane passes run 27 to 47 (PALR…MWLL), 66 to 86 (LLFY…VLFY), 104 to 124 (GGMS…YITW), 130 to 150 (FFAV…AGRI), 181 to 201 (PSQL…LYWF), 208 to 228 (VGAV…IVET), and 242 to 262 (LMTM…YLIL). Arg149 is an a 1,2-diacyl-sn-glycero-3-phospho-(1'-sn-glycerol) binding site.

This sequence belongs to the Lgt family.

The protein localises to the cell inner membrane. It catalyses the reaction L-cysteinyl-[prolipoprotein] + a 1,2-diacyl-sn-glycero-3-phospho-(1'-sn-glycerol) = an S-1,2-diacyl-sn-glyceryl-L-cysteinyl-[prolipoprotein] + sn-glycerol 1-phosphate + H(+). It functions in the pathway protein modification; lipoprotein biosynthesis (diacylglyceryl transfer). Its function is as follows. Catalyzes the transfer of the diacylglyceryl group from phosphatidylglycerol to the sulfhydryl group of the N-terminal cysteine of a prolipoprotein, the first step in the formation of mature lipoproteins. This Shewanella oneidensis (strain ATCC 700550 / JCM 31522 / CIP 106686 / LMG 19005 / NCIMB 14063 / MR-1) protein is Phosphatidylglycerol--prolipoprotein diacylglyceryl transferase.